The primary structure comprises 254 residues: 30 kDa major early protein (254 aa).

In Human cytomegalovirus (strain Eisenhardt) (HHV-5), this protein is 30 kDa major early protein.